The following is a 716-amino-acid chain: Polyribonucleotide nucleotidyltransferase (716 aa).

Residues D493 and D499 each coordinate Mg(2+). The KH domain occupies 560–619 (PRMITIKINPEKIRDVIGKGGSVIRALTEETGTTIDISDDGVVTIASTSSEGMAEAKKRI). The 69-residue stretch at 629-697 (GQVYEGTVLK…EKGRVRLSAK (69 aa)) folds into the S1 motif domain.

Belongs to the polyribonucleotide nucleotidyltransferase family. The cofactor is Mg(2+).

It is found in the cytoplasm. It catalyses the reaction RNA(n+1) + phosphate = RNA(n) + a ribonucleoside 5'-diphosphate. Involved in mRNA degradation. Catalyzes the phosphorolysis of single-stranded polyribonucleotides processively in the 3'- to 5'-direction. The protein is Polyribonucleotide nucleotidyltransferase of Paraburkholderia xenovorans (strain LB400).